Here is a 271-residue protein sequence, read N- to C-terminus: D-methionine-binding lipoprotein MetQ (271 aa).

Residues 1–22 (MAFKFKTFAAVGALIGSLALVG) form the signal peptide. Cys-23 carries N-palmitoyl cysteine lipidation. The S-diacylglycerol cysteine moiety is linked to residue Cys-23.

The protein belongs to the NlpA lipoprotein family.

The protein localises to the cell membrane. Its function is as follows. This protein is a component of a D-methionine permease, a binding protein-dependent, ATP-driven transport system. In Escherichia coli (strain K12), this protein is D-methionine-binding lipoprotein MetQ (metQ).